Consider the following 162-residue polypeptide: UPF0262 protein HNE_1347 (162 aa).

The protein belongs to the UPF0262 family.

The chain is UPF0262 protein HNE_1347 from Hyphomonas neptunium (strain ATCC 15444).